A 235-amino-acid polypeptide reads, in one-letter code: Phosphatidylserine decarboxylase proenzyme (235 aa).

Serine 204 (schiff-base intermediate with substrate; via pyruvic acid) is an active-site residue. Serine 204 is subject to Pyruvic acid (Ser); by autocatalysis.

Belongs to the phosphatidylserine decarboxylase family. PSD-A subfamily. Heterodimer of a large membrane-associated beta subunit and a small pyruvoyl-containing alpha subunit. Requires pyruvate as cofactor. In terms of processing, is synthesized initially as an inactive proenzyme. Formation of the active enzyme involves a self-maturation process in which the active site pyruvoyl group is generated from an internal serine residue via an autocatalytic post-translational modification. Two non-identical subunits are generated from the proenzyme in this reaction, and the pyruvate is formed at the N-terminus of the alpha chain, which is derived from the carboxyl end of the proenzyme. The post-translation cleavage follows an unusual pathway, termed non-hydrolytic serinolysis, in which the side chain hydroxyl group of the serine supplies its oxygen atom to form the C-terminus of the beta chain, while the remainder of the serine residue undergoes an oxidative deamination to produce ammonia and the pyruvoyl prosthetic group on the alpha chain.

The protein resides in the cell membrane. The catalysed reaction is a 1,2-diacyl-sn-glycero-3-phospho-L-serine + H(+) = a 1,2-diacyl-sn-glycero-3-phosphoethanolamine + CO2. The protein operates within phospholipid metabolism; phosphatidylethanolamine biosynthesis; phosphatidylethanolamine from CDP-diacylglycerol: step 2/2. In terms of biological role, catalyzes the formation of phosphatidylethanolamine (PtdEtn) from phosphatidylserine (PtdSer). The sequence is that of Phosphatidylserine decarboxylase proenzyme from Mycobacterium sp. (strain KMS).